Reading from the N-terminus, the 360-residue chain is Photosystem II protein D1 (360 aa).

The next 3 helical transmembrane spans lie at Y29–T46, H118–F133, and W142–A156. H118 is a chlorophyll a binding site. W126 is a pheophytin a binding site. The [CaMn4O5] cluster site is built by D170 and E189. Residues F197–L218 traverse the membrane as a helical segment. Residue H198 coordinates chlorophyll a. A quinone is bound by residues H215 and S264–F265. Residue H215 participates in Fe cation binding. H272 provides a ligand contact to Fe cation. Residues F274–L288 form a helical membrane-spanning segment. 4 residues coordinate [CaMn4O5] cluster: H332, E333, D342, and A344. The propeptide occupies A345–G360.

This sequence belongs to the reaction center PufL/M/PsbA/D family. PSII is composed of 1 copy each of membrane proteins PsbA, PsbB, PsbC, PsbD, PsbE, PsbF, PsbH, PsbI, PsbJ, PsbK, PsbL, PsbM, PsbT, PsbX, PsbY, PsbZ, Psb30/Ycf12, at least 3 peripheral proteins of the oxygen-evolving complex and a large number of cofactors. It forms dimeric complexes. It depends on The D1/D2 heterodimer binds P680, chlorophylls that are the primary electron donor of PSII, and subsequent electron acceptors. It shares a non-heme iron and each subunit binds pheophytin, quinone, additional chlorophylls, carotenoids and lipids. D1 provides most of the ligands for the Mn4-Ca-O5 cluster of the oxygen-evolving complex (OEC). There is also a Cl(-1) ion associated with D1 and D2, which is required for oxygen evolution. The PSII complex binds additional chlorophylls, carotenoids and specific lipids. as a cofactor. Tyr-161 forms a radical intermediate that is referred to as redox-active TyrZ, YZ or Y-Z. In terms of processing, C-terminally processed by CTPA; processing is essential to allow assembly of the oxygen-evolving complex and thus photosynthetic growth.

Its subcellular location is the plastid. The protein resides in the chloroplast thylakoid membrane. It carries out the reaction 2 a plastoquinone + 4 hnu + 2 H2O = 2 a plastoquinol + O2. Functionally, photosystem II (PSII) is a light-driven water:plastoquinone oxidoreductase that uses light energy to abstract electrons from H(2)O, generating O(2) and a proton gradient subsequently used for ATP formation. It consists of a core antenna complex that captures photons, and an electron transfer chain that converts photonic excitation into a charge separation. The D1/D2 (PsbA/PsbD) reaction center heterodimer binds P680, the primary electron donor of PSII as well as several subsequent electron acceptors. In Rhodomonas salina (Cryptomonas salina), this protein is Photosystem II protein D1.